The sequence spans 217 residues: Small ribosomal subunit protein uS3 (217 aa).

The 71-residue stretch at Ile-40–Arg-110 folds into the KH type-2 domain.

The protein belongs to the universal ribosomal protein uS3 family. As to quaternary structure, part of the 30S ribosomal subunit. Forms a tight complex with proteins S10 and S14.

Functionally, binds the lower part of the 30S subunit head. Binds mRNA in the 70S ribosome, positioning it for translation. The sequence is that of Small ribosomal subunit protein uS3 from Rickettsia africae (strain ESF-5).